The following is a 123-amino-acid chain: Seminal vesicle secretory protein 5 (123 aa).

An N-terminal signal peptide occupies residues 1–21; sequence MSPTGFFLLTVLLVLVTEAAS. Residues 50-123 form a disordered region; that stretch reads GSSSTFGAFS…TKVKTRITRK (74 aa). The span at 64–75 shows a compositional bias: low complexity; it reads SRSNFKSKSPSS. A compositionally biased stretch (basic and acidic residues) spans 77–87; the sequence is TREKVNEESRS.

This sequence belongs to the SVP2/SVP5/SVP6 family. As to expression, testis.

The protein localises to the secreted. It is found in the extracellular space. This chain is Seminal vesicle secretory protein 5 (Svs5), found in Rattus norvegicus (Rat).